The chain runs to 153 residues: Protein-export protein SecB (153 aa).

The protein belongs to the SecB family. Homotetramer, a dimer of dimers. One homotetramer interacts with 1 SecA dimer.

It localises to the cytoplasm. One of the proteins required for the normal export of preproteins out of the cell cytoplasm. It is a molecular chaperone that binds to a subset of precursor proteins, maintaining them in a translocation-competent state. It also specifically binds to its receptor SecA. This is Protein-export protein SecB from Edwardsiella ictaluri (strain 93-146).